A 378-amino-acid chain; its full sequence is Cytochrome b (378 aa).

4 helical membrane-spanning segments follow: residues 34–54, 78–99, 114–134, and 179–199; these read FGSL…FLAM, WFLR…FMHV, WNTG…GYVL, and FFTF…IHLL. The heme b site is built by His-84 and His-98. 2 residues coordinate heme b: His-183 and His-197. His-202 contributes to the a ubiquinone binding site. A run of 4 helical transmembrane segments spans residues 227-247, 289-309, 321-341, and 348-368; these read YKDI…IWKF, LGGV…PFTH, LNQI…WIGA, and YVLT…INPL.

The protein belongs to the cytochrome b family. As to quaternary structure, the main subunits of complex b-c1 are: cytochrome b, cytochrome c1 and the Rieske protein. Heme b is required as a cofactor.

It localises to the mitochondrion inner membrane. Its function is as follows. Component of the ubiquinol-cytochrome c reductase complex (complex III or cytochrome b-c1 complex) that is part of the mitochondrial respiratory chain. The b-c1 complex mediates electron transfer from ubiquinol to cytochrome c. Contributes to the generation of a proton gradient across the mitochondrial membrane that is then used for ATP synthesis. The sequence is that of Cytochrome b (MT-CYB) from Anopheles quadrimaculatus (Common malaria mosquito).